Consider the following 416-residue polypeptide: tRNA(Met) cytidine acetate ligase (416 aa).

Residues 7–20, glycine 101, asparagine 162, and 187–188 each bind ATP; these read VVEY…HLHH and RI.

The protein belongs to the TmcAL family.

The protein localises to the cytoplasm. It carries out the reaction cytidine(34) in elongator tRNA(Met) + acetate + ATP = N(4)-acetylcytidine(34) in elongator tRNA(Met) + AMP + diphosphate. Its function is as follows. Catalyzes the formation of N(4)-acetylcytidine (ac(4)C) at the wobble position of elongator tRNA(Met), using acetate and ATP as substrates. First activates an acetate ion to form acetyladenylate (Ac-AMP) and then transfers the acetyl group to tRNA to form ac(4)C34. In Halalkalibacterium halodurans (strain ATCC BAA-125 / DSM 18197 / FERM 7344 / JCM 9153 / C-125) (Bacillus halodurans), this protein is tRNA(Met) cytidine acetate ligase.